Consider the following 304-residue polypeptide: Bifunctional protein FolD 3 (304 aa).

NADP(+)-binding positions include 172–174 (GRS), serine 197, and isoleucine 238.

This sequence belongs to the tetrahydrofolate dehydrogenase/cyclohydrolase family. In terms of assembly, homodimer.

It carries out the reaction (6R)-5,10-methylene-5,6,7,8-tetrahydrofolate + NADP(+) = (6R)-5,10-methenyltetrahydrofolate + NADPH. The catalysed reaction is (6R)-5,10-methenyltetrahydrofolate + H2O = (6R)-10-formyltetrahydrofolate + H(+). It participates in one-carbon metabolism; tetrahydrofolate interconversion. Its function is as follows. Catalyzes the oxidation of 5,10-methylenetetrahydrofolate to 5,10-methenyltetrahydrofolate and then the hydrolysis of 5,10-methenyltetrahydrofolate to 10-formyltetrahydrofolate. This is Bifunctional protein FolD 3 from Rhizorhabdus wittichii (strain DSM 6014 / CCUG 31198 / JCM 15750 / NBRC 105917 / EY 4224 / RW1) (Sphingomonas wittichii).